A 478-amino-acid chain; its full sequence is Dynein regulatory complex subunit 4 (478 aa).

Over residues 1-12 (MAPKRRGKKGKA) the composition is skewed to basic residues. The disordered stretch occupies residues 1-32 (MAPKRRGKKGKAKGNAVVDGVAPEDMSKEQVE). Positions 1 to 114 (MAPKRRGKKG…LLYEHQNNLA (114 aa)) are regulates microtubule-binding. Coiled coils occupy residues 24-201 (EDMS…DELD) and 243-427 (NNLA…LARV). A microtubule-binding region spans residues 115–258 (EVKTEGTVVM…NSLKEQMEDM (144 aa)). Residues 357 to 478 (QQKTGFKNLV…GPAGLVGAPT (122 aa)) are interaction with SMO.

This sequence belongs to the DRC4 family. In terms of assembly, component of the nexin-dynein regulatory complex (N-DRC). Interacts with microtubules. Interacts with SMO. Interacts (via coiled-coil domains) with RAB3B (in GTP-bound form). Interacts with DRC1. Interacts with DRC7.

The protein localises to the cytoplasm. It localises to the cytoskeleton. The protein resides in the cell projection. Its subcellular location is the cilium. It is found in the flagellum. The protein localises to the cilium axoneme. It localises to the cilium basal body. The protein resides in the golgi apparatus. Its subcellular location is the flagellum axoneme. Its function is as follows. Component of the nexin-dynein regulatory complex (N-DRC), a key regulator of ciliary/flagellar motility which maintains the alignment and integrity of the distal axoneme and regulates microtubule sliding in motile axonemes. Plays an important role in the assembly of the N-DRC linker. Plays dual roles at both the primary (or non-motile) cilia to regulate hedgehog signaling and in motile cilia to coordinate cilia movement. Required for proper motile cilia functioning. Positively regulates ciliary smoothened (SMO)-dependent Hedgehog (Hh) signaling pathway by facilitating the trafficking of SMO into the cilium and the stimulation of SMO activity in a GRK2-dependent manner. This is Dynein regulatory complex subunit 4 (Gas8) from Rattus norvegicus (Rat).